Consider the following 433-residue polypeptide: Serine--tRNA ligase (433 aa).

236–238 (TAE) contributes to the L-serine binding site. 267 to 269 (RSE) serves as a coordination point for ATP. Glu290 contacts L-serine. Position 354–357 (354–357 (EISS)) interacts with ATP. Ser394 lines the L-serine pocket.

This sequence belongs to the class-II aminoacyl-tRNA synthetase family. Type-1 seryl-tRNA synthetase subfamily. Homodimer. The tRNA molecule binds across the dimer.

The protein resides in the cytoplasm. It catalyses the reaction tRNA(Ser) + L-serine + ATP = L-seryl-tRNA(Ser) + AMP + diphosphate + H(+). The enzyme catalyses tRNA(Sec) + L-serine + ATP = L-seryl-tRNA(Sec) + AMP + diphosphate + H(+). The protein operates within aminoacyl-tRNA biosynthesis; selenocysteinyl-tRNA(Sec) biosynthesis; L-seryl-tRNA(Sec) from L-serine and tRNA(Sec): step 1/1. Catalyzes the attachment of serine to tRNA(Ser). Is also able to aminoacylate tRNA(Sec) with serine, to form the misacylated tRNA L-seryl-tRNA(Sec), which will be further converted into selenocysteinyl-tRNA(Sec). The polypeptide is Serine--tRNA ligase (Acidiphilium cryptum (strain JF-5)).